The primary structure comprises 301 residues: Eukaryotic translation initiation factor 3 subunit F (301 aa).

Positions 32-169 constitute an MPN domain; the sequence is VHVHPVALFS…IKSYISSPLG (138 aa).

It belongs to the eIF-3 subunit F family. As to quaternary structure, component of the eukaryotic translation initiation factor 3 (eIF-3) complex.

Its subcellular location is the cytoplasm. Its function is as follows. Component of the eukaryotic translation initiation factor 3 (eIF-3) complex, which is involved in protein synthesis of a specialized repertoire of mRNAs and, together with other initiation factors, stimulates binding of mRNA and methionyl-tRNAi to the 40S ribosome. The eIF-3 complex specifically targets and initiates translation of a subset of mRNAs involved in cell proliferation. The chain is Eukaryotic translation initiation factor 3 subunit F from Mycosarcoma maydis (Corn smut fungus).